The chain runs to 151 residues: Melatonin receptor type 1C (151 aa).

Residues 1-13 (CHSLRYDRLYSRR) lie on the Cytoplasmic side of the membrane. Residues 14 to 34 (NTCLYLLLTWMLTALATVPNF) form a helical membrane-spanning segment. The Extracellular segment spans residues 35 to 58 (LVGSLKYDPRVFSCTFTQTASSSY). The helical transmembrane segment at 59-79 (TVCVVLIHFLVPLGVVSFCYL) threads the bilayer. Residues 80–109 (RIWTLVIRVKGRVRPNPKVRAADLRNFLTM) lie on the Cytoplasmic side of the membrane. The helical transmembrane segment at 110–130 (FVVFVLFAVCWAPLNFIGLAV) threads the bilayer. At 131 to 143 (AINPAKVAPNIPE) the chain is on the extracellular side. Residues 144–151 (WLFVTSYF) traverse the membrane as a helical segment.

It belongs to the G-protein coupled receptor 1 family.

The protein resides in the cell membrane. High affinity receptor for melatonin. The activity of this receptor is mediated by pertussis toxin sensitive G proteins that inhibits adenylate cyclase activity. The sequence is that of Melatonin receptor type 1C (mtnr1c) from Danio rerio (Zebrafish).